Reading from the N-terminus, the 500-residue chain is Polyamine oxidase 1 (500 aa).

The N-terminal stretch at methionine 1–alanine 28 is a signal peptide. FAD is bound by residues methionine 42–serine 43, glutamate 63, arginine 71, and asparagine 87–tryptophan 88. Glutamate 90 provides a ligand contact to substrate. A glycan (N-linked (GlcNAc...) asparagine) is linked at asparagine 105. Position 198 (glutamate 198) interacts with substrate. FAD contacts are provided by valine 265, tyrosine 427, and glutamate 458. Position 466 (glycine 466) interacts with substrate. Tyrosine 467 to valine 468 contacts FAD. An intrachain disulfide couples cysteine 485 to cysteine 491.

Belongs to the flavin monoamine oxidase family. Monomer. Requires FAD as cofactor.

Its subcellular location is the secreted. It localises to the extracellular space. The protein resides in the apoplast. The protein localises to the cell wall. It carries out the reaction spermidine + O2 + H2O = 4-aminobutanal + propane-1,3-diamine + H2O2. It catalyses the reaction N(8)-acetylspermidine + O2 + H2O = 4-acetamidobutanal + propane-1,3-diamine + H2O2. The enzyme catalyses spermine + O2 + H2O = N-(3-aminopropyl)-4-aminobutanal + propane-1,3-diamine + H2O2. The catalysed reaction is N(1)-acetylspermine + O2 + H2O = N-(3-acetamidopropyl)-4-aminobutanal + propane-1,3-diamine + H2O2. Its pathway is amine and polyamine degradation; spermine degradation. Its function is as follows. Flavoenzyme involved in polyamine back-conversion. Catalyzes the oxidation of the secondary amino group of polyamines, such as spermine, spermidine and their acetyl derivatives. Plays an important role in the regulation of polyamine intracellular concentration. This chain is Polyamine oxidase 1, found in Zea mays (Maize).